Here is a 140-residue protein sequence, read N- to C-terminus: Nucleoside diphosphate kinase (140 aa).

Positions 11, 59, 87, 93, 104, and 114 each coordinate ATP. His-117 serves as the catalytic Pros-phosphohistidine intermediate.

Belongs to the NDK family. As to quaternary structure, homotetramer. Mg(2+) is required as a cofactor.

The protein resides in the cytoplasm. The catalysed reaction is a 2'-deoxyribonucleoside 5'-diphosphate + ATP = a 2'-deoxyribonucleoside 5'-triphosphate + ADP. It carries out the reaction a ribonucleoside 5'-diphosphate + ATP = a ribonucleoside 5'-triphosphate + ADP. Functionally, major role in the synthesis of nucleoside triphosphates other than ATP. The ATP gamma phosphate is transferred to the NDP beta phosphate via a ping-pong mechanism, using a phosphorylated active-site intermediate. This is Nucleoside diphosphate kinase from Methylobacterium nodulans (strain LMG 21967 / CNCM I-2342 / ORS 2060).